Reading from the N-terminus, the 554-residue chain is Solute carrier family 22 member 22 (554 aa).

Residues 1-15 (MDFDEILHHVGDSGR) lie on the Cytoplasmic side of the membrane. The helical transmembrane segment at 16–36 (FQICMIILLNILSLVLSPHDV) threads the bilayer. The Extracellular portion of the chain corresponds to 37 to 144 (LENFTAAIPA…DLVCDFQSFK (108 aa)). The N-linked (GlcNAc...) asparagine glycan is linked to Asn39. The chain crosses the membrane as a helical span at residues 145–165 (YYAQATSLAGHLVSCPLSGII). The Cytoplasmic segment spans residues 166–172 (SDRFGRK). A helical transmembrane segment spans residues 173–193 (PLLMYCSLAYGAVGTYCAFAP). An N-linked (GlcNAc...) asparagine glycan is attached at Asn194. Residues 194–199 (NFSVYC) lie on the Extracellular side of the membrane. The helical transmembrane segment at 200 to 220 (VLRFLLSAFQSTILINSLILV) threads the bilayer. The Cytoplasmic portion of the chain corresponds to 221 to 231 (LEEASVQWHPT). Residues 232–252 (IIVLSGLFNSIGQGVLGGLAY) form a helical membrane-spanning segment. Topologically, residues 253-258 (VISDWH) are extracellular. A helical transmembrane segment spans residues 259–279 (LLQLAYALPFFIFFVLFCWVP). Residues 280-347 (ESVRWLIITG…DIFINPLIRK (68 aa)) are Cytoplasmic-facing. Residues 348–368 (IVLSNSSLLFAELFSFVGLLL) traverse the membrane as a helical segment. At 369–376 (DVQLLGKN) the chain is on the extracellular side. Residues 377–397 (MFLTQIFLGAIDVPSKSLTYF) form a helical membrane-spanning segment. Residues 398 to 405 (TIRNVSRR) are Cytoplasmic-facing. A helical transmembrane segment spans residues 406–426 (PLIAFLLLTTGSCITITIFIS). The Extracellular segment spans residues 427-434 (EEMYVLRT). A helical membrane pass occupies residues 435-455 (IIFILGKGCFAAFTCISTTYI). The Cytoplasmic segment spans residues 456 to 466 (NELSPVELRST). The chain crosses the membrane as a helical span at residues 467-487 (LNGVFLAVVRLAGVLSALTLA). Residues 488-491 (TRKY) are Extracellular-facing. A helical membrane pass occupies residues 492-512 (FVYLPMILYGVLPIVATISIL). Over 513-554 (FLPETFNLPHTDIIKDMEKRKRLMSKNISKKEGQDFLETTEC) the chain is Cytoplasmic.

The protein belongs to the major facilitator (TC 2.A.1) superfamily. Organic cation transporter (TC 2.A.1.19) family. Specifically expressed in kidney where it is found in proximal convoluted tubules (at protein level). Colocalizes with the prostaglandin-inactivating enzyme HPGD in kidney (at protein level). Not detected in other tissues tested.

The protein localises to the basolateral cell membrane. Sodium-independent organic anion transporter which exhibits high specificity for a subset of prostaglandins including prostaglandin E2 (PGE2), prostaglandin E1 (PGE1), prostaglandin F2-alpha (PGF2-alpha) and prostaglandin D2 (PGD2). This Mus musculus (Mouse) protein is Solute carrier family 22 member 22.